Reading from the N-terminus, the 270-residue chain is Probable feruloyl esterase C (270 aa).

Positions 1–21 are cleaved as a signal peptide; the sequence is MIKSIILQAIMVLSTLTSVHG. N-linked (GlcNAc...) asparagine glycosylation occurs at Asn-23.

It belongs to the faeC family.

It localises to the secreted. It carries out the reaction feruloyl-polysaccharide + H2O = ferulate + polysaccharide.. Functionally, involved in degradation of plant cell walls. Hydrolyzes the feruloyl-arabinose ester bond in arabinoxylans, and the feruloyl-galactose ester bond in pectin. Active against paranitrophenyl-acetate, methyl ferulate and wheat arabinoxylan. The chain is Probable feruloyl esterase C (faeC) from Aspergillus oryzae (strain ATCC 42149 / RIB 40) (Yellow koji mold).